A 402-amino-acid polypeptide reads, in one-letter code: Ferredoxin--NADP reductase (402 aa).

A CpcD-like domain is found at asparagine 18 to alanine 74. The disordered stretch occupies residues isoleucine 80–lysine 101. The span at glutamine 85–serine 99 shows a compositional bias: low complexity. The region spanning lysine 120–leucine 245 is the FAD-binding FR-type domain. Residues arginine 179 to serine 182, cysteine 200 to arginine 202, tyrosine 206, valine 218 to serine 220, and threonine 260 contribute to the FAD site. NADP(+) is bound by residues serine 182 and arginine 202. NADP(+)-binding positions include threonine 260, valine 292–proline 293, serine 322–arginine 323, lysine 332, lysine 332–glutamine 336, glycine 361–leucine 362, and glutamate 400.

The protein belongs to the ferredoxin--NADP reductase type 1 family. It depends on FAD as a cofactor.

It localises to the cellular thylakoid membrane. It carries out the reaction 2 reduced [2Fe-2S]-[ferredoxin] + NADP(+) + H(+) = 2 oxidized [2Fe-2S]-[ferredoxin] + NADPH. This chain is Ferredoxin--NADP reductase (petH), found in Picosynechococcus sp. (strain ATCC 27264 / PCC 7002 / PR-6) (Agmenellum quadruplicatum).